The sequence spans 294 residues: UPF0718 protein YcgR (294 aa).

A run of 8 helical transmembrane segments spans residues 15–35, 54–74, 92–112, 117–137, 174–194, 215–235, 247–267, and 273–293; these read ISIL…SGII, LAVL…CGII, AFML…YIAF, SVVF…GVIL, IDEF…AAAM, LVMM…AFIA, LIAF…MMLA, and FVFL…LLVK.

It belongs to the UPF0718 family.

The protein resides in the cell membrane. The sequence is that of UPF0718 protein YcgR (ycgR) from Bacillus subtilis (strain 168).